Consider the following 319-residue polypeptide: tRNA dimethylallyltransferase (319 aa).

Residue 10 to 17 (GPTAVGKT) participates in ATP binding. Residue 12-17 (TAVGKT) coordinates substrate. Positions 35-38 (DSMQ) are interaction with substrate tRNA.

It belongs to the IPP transferase family. Monomer. Mg(2+) is required as a cofactor.

It catalyses the reaction adenosine(37) in tRNA + dimethylallyl diphosphate = N(6)-dimethylallyladenosine(37) in tRNA + diphosphate. Its function is as follows. Catalyzes the transfer of a dimethylallyl group onto the adenine at position 37 in tRNAs that read codons beginning with uridine, leading to the formation of N6-(dimethylallyl)adenosine (i(6)A). This chain is tRNA dimethylallyltransferase, found in Symbiobacterium thermophilum (strain DSM 24528 / JCM 14929 / IAM 14863 / T).